The primary structure comprises 554 residues: Putative F-box/LRR-repeat protein 8 (554 aa).

The F-box domain maps to 71–117 (YDYISNLPDECLSLIFQSLTCADLKRCSLVCRRWLTIEGQCRHRLSL). 12 LRR repeats span residues 119-144 (AQSD…VLRS), 148-173 (SLGI…KLRG), 174-199 (CPEI…SFGS), 205-224 (KGMN…SVKR), 250-275 (KELH…KIFR), 301-325 (RIQM…HLVK), 326-351 (TPDC…HIDG), 354-379 (TNRI…VLIG), 383-404 (TKLS…ALCG), 405-428 (SDTV…KLCI), 430-455 (NCPI…KVKK), and 456-480 (CRGV…NLDA).

This Arabidopsis thaliana (Mouse-ear cress) protein is Putative F-box/LRR-repeat protein 8 (FBL8).